Consider the following 238-residue polypeptide: Ephrin-A3 (238 aa).

Residues 1-22 (MAAAPLLLLLLLVPVPLLPLLA) form the signal peptide. The region spanning 30-169 (GNRHAVYWNS…RMKVFVCCAS (140 aa)) is the Ephrin RBD domain. 3 N-linked (GlcNAc...) asparagine glycosylation sites follow: Asn38, Asn67, and Asn100. Cystine bridges form between Cys63/Cys110 and Cys99/Cys158. The GPI-anchor amidated glycine moiety is linked to residue Gly214. Positions 215–238 (TSPKREHLPLAVGIAFFLMTFLAS) are cleaved as a propeptide — removed in mature form.

This sequence belongs to the ephrin family. In terms of assembly, interacts with EPHA8; activates EPHA8. As to expression, expressed in brain, skeletal muscle, spleen, thymus, prostate, testis, ovary, small intestine, and peripheral blood leukocytes.

It localises to the cell membrane. Cell surface GPI-bound ligand for Eph receptors, a family of receptor tyrosine kinases which are crucial for migration, repulsion and adhesion during neuronal, vascular and epithelial development. Binds promiscuously Eph receptors residing on adjacent cells, leading to contact-dependent bidirectional signaling into neighboring cells. The signaling pathway downstream of the receptor is referred to as forward signaling while the signaling pathway downstream of the ephrin ligand is referred to as reverse signaling. The polypeptide is Ephrin-A3 (EFNA3) (Homo sapiens (Human)).